The following is a 100-amino-acid chain: Small ribosomal subunit protein uS14c (100 aa).

Belongs to the universal ribosomal protein uS14 family. Part of the 30S ribosomal subunit.

The protein localises to the plastid. Its subcellular location is the chloroplast. Functionally, binds 16S rRNA, required for the assembly of 30S particles. This is Small ribosomal subunit protein uS14c from Lactuca sativa (Garden lettuce).